The chain runs to 331 residues: Aspartate carbamoyltransferase catalytic subunit (331 aa).

2 residues coordinate carbamoyl phosphate: arginine 55 and threonine 56. Position 84 (lysine 84) interacts with L-aspartate. The carbamoyl phosphate site is built by arginine 105, histidine 133, and glutamine 136. Positions 166 and 229 each coordinate L-aspartate. Residues leucine 268 and proline 269 each contribute to the carbamoyl phosphate site.

Belongs to the aspartate/ornithine carbamoyltransferase superfamily. ATCase family. Heterododecamer (2C3:3R2) of six catalytic PyrB chains organized as two trimers (C3), and six regulatory PyrI chains organized as three dimers (R2).

The enzyme catalyses carbamoyl phosphate + L-aspartate = N-carbamoyl-L-aspartate + phosphate + H(+). The protein operates within pyrimidine metabolism; UMP biosynthesis via de novo pathway; (S)-dihydroorotate from bicarbonate: step 2/3. In terms of biological role, catalyzes the condensation of carbamoyl phosphate and aspartate to form carbamoyl aspartate and inorganic phosphate, the committed step in the de novo pyrimidine nucleotide biosynthesis pathway. This chain is Aspartate carbamoyltransferase catalytic subunit, found in Alkaliphilus oremlandii (strain OhILAs) (Clostridium oremlandii (strain OhILAs)).